The sequence spans 179 residues: Putative BPIFA4P protein (179 aa).

Residues 1-20 form the signal peptide; that stretch reads MLNVSGLFVLLCGLLVSSSA.

It belongs to the BPI/LBP/Plunc superfamily. Plunc family. Expressed in breast cancer and salivary gland.

The protein localises to the secreted. In terms of biological role, major protein in sweat, has surfactant properties. This chain is Putative BPIFA4P protein (BPIFA4P), found in Homo sapiens (Human).